The chain runs to 455 residues: Chromosomal replication initiator protein DnaA (455 aa).

A domain I, interacts with DnaA modulators region spans residues 1-75 (MDTNNNIEKE…EILSQNKVGM (75 aa)). Residues 75–106 (MHLAHSVDVRIEVAPKIQISTQSNINYKATKM) are domain II. The interval 107 to 321 (SVKDSYTFEN…GAIIKISVNA (215 aa)) is domain III, AAA+ region. Residues G151, G153, K154, and T155 each contribute to the ATP site. The interval 322–455 (NLMNASIDLN…DKKTAFNSSE (134 aa)) is domain IV, binds dsDNA.

It belongs to the DnaA family. Oligomerizes as a right-handed, spiral filament on DNA at oriC.

The protein localises to the cytoplasm. Functionally, plays an essential role in the initiation and regulation of chromosomal replication. ATP-DnaA binds to the origin of replication (oriC) to initiate formation of the DNA replication initiation complex once per cell cycle. Binds the DnaA box (a 9 base pair repeat at the origin) and separates the double-stranded (ds)DNA. Forms a right-handed helical filament on oriC DNA; dsDNA binds to the exterior of the filament while single-stranded (ss)DNA is stabiized in the filament's interior. The ATP-DnaA-oriC complex binds and stabilizes one strand of the AT-rich DNA unwinding element (DUE), permitting loading of DNA polymerase. After initiation quickly degrades to an ADP-DnaA complex that is not apt for DNA replication. Binds acidic phospholipids. In Helicobacter pylori (strain HPAG1), this protein is Chromosomal replication initiator protein DnaA.